Reading from the N-terminus, the 89-residue chain is UPF0223 protein BCG9842_B1176 (89 aa).

It belongs to the UPF0223 family.

The protein is UPF0223 protein BCG9842_B1176 of Bacillus cereus (strain G9842).